A 338-amino-acid chain; its full sequence is POU domain, class 4, transcription factor 3 (338 aa).

Residues Arg56–Ile65 carry the POU-IV box motif. Residues Asp179–Glu256 form the POU-specific domain. The segment at residues Arg274–Lys333 is a DNA-binding region (homeobox).

Belongs to the POU transcription factor family. Class-4 subfamily. As to quaternary structure, interacts with ISL1. As to expression, brain.

It is found in the nucleus. The protein resides in the cytoplasm. In terms of biological role, acts as a transcriptional activator. Acts by binding to sequences related to the consensus octamer motif 5'-ATGCAAAT-3' in the regulatory regions of its target genes. Involved in the auditory system development, required for terminal differentiation of hair cells in the inner ear. The polypeptide is POU domain, class 4, transcription factor 3 (Mus musculus (Mouse)).